The following is a 227-amino-acid chain: uncharacterized protein (227 aa).

An N-terminal signal peptide occupies residues 1 to 23 (MKKRFSLIMMTGLLFGLTSPAFA). One can recognise a VWFA domain in the interval 36–227 (NVAVLLDASG…FTQQSLMLSK (192 aa)).

It to B.subtilis YwmD.

This is an uncharacterized protein from Bacillus subtilis (strain 168).